The following is a 400-amino-acid chain: Phosphoglycerate kinase (400 aa).

Substrate-binding positions include 21-23, arginine 36, 59-62, arginine 114, and arginine 147; these read DLN and HLGR. ATP-binding positions include lysine 202, glutamate 329, and 355–358; that span reads GGDT.

This sequence belongs to the phosphoglycerate kinase family. Monomer.

The protein resides in the cytoplasm. It carries out the reaction (2R)-3-phosphoglycerate + ATP = (2R)-3-phospho-glyceroyl phosphate + ADP. The protein operates within carbohydrate degradation; glycolysis; pyruvate from D-glyceraldehyde 3-phosphate: step 2/5. This chain is Phosphoglycerate kinase, found in Psychrobacter cryohalolentis (strain ATCC BAA-1226 / DSM 17306 / VKM B-2378 / K5).